A 476-amino-acid chain; its full sequence is Cysteine--tRNA ligase (476 aa).

Cysteine 29 contributes to the Zn(2+) binding site. Residues 31–41 (PTVYDYPHLGH) carry the 'HIGH' region motif. Zn(2+)-binding residues include cysteine 209, histidine 234, and glutamate 238. The 'KMSKS' region motif lies at 266–270 (KMSKS). Lysine 269 lines the ATP pocket.

The protein belongs to the class-I aminoacyl-tRNA synthetase family. Zn(2+) is required as a cofactor.

Its subcellular location is the cytoplasm. The catalysed reaction is tRNA(Cys) + L-cysteine + ATP = L-cysteinyl-tRNA(Cys) + AMP + diphosphate. The polypeptide is Cysteine--tRNA ligase (cysS) (Pyrococcus horikoshii (strain ATCC 700860 / DSM 12428 / JCM 9974 / NBRC 100139 / OT-3)).